Here is a 128-residue protein sequence, read N- to C-terminus: Iron-sulfur cluster insertion protein ErpA (128 aa).

3 residues coordinate iron-sulfur cluster: Cys56, Cys120, and Cys122.

Belongs to the HesB/IscA family. In terms of assembly, homodimer. Iron-sulfur cluster is required as a cofactor.

In terms of biological role, required for insertion of 4Fe-4S clusters for at least IspG. This is Iron-sulfur cluster insertion protein ErpA from Xanthomonas campestris pv. campestris (strain 8004).